The primary structure comprises 346 residues: Selenocysteine Se-methyltransferase (346 aa).

The Hcy-binding domain maps to serine 13–leucine 330. Zn(2+) is bound by residues cysteine 248, cysteine 315, and cysteine 316.

Requires Zn(2+) as cofactor. As to expression, expressed in roots, young leaves and florets, but not detected in plants not exposed to selenium.

The enzyme catalyses S-methyl-L-methionine + L-selenocysteine = Se-methyl-L-selenocysteine + L-methionine + H(+). Its activity is regulated as follows. Inhibited by L-methionine. In terms of biological role, catalyzes the methylation of DL- and L-selenocysteine with S-methylmethionine as donor. Also methylates DL-homocysteine, DL- and L-cysteine in vitro. May be involved in selenium detoxification. In Brassica oleracea var. italica (Broccoli), this protein is Selenocysteine Se-methyltransferase (SMT).